Here is a 157-residue protein sequence, read N- to C-terminus: Monooxygenase CPUR_05417 (157 aa).

It belongs to the avfA family.

It participates in secondary metabolite biosynthesis. Functionally, monooxygenase; part of the ergochrome gene cluster responsible for the typical purple-black color of the ergot sclerotia. The ergochrome gene cluster produces several ergot pigments including the yellow ergochrome secalonic acid and its derivatives, as well as the red anthraquinones endocrocin and clavorubin. The pathway begins with the synthesis of atrochrysone thioester by the polyketide synthase (PKS) CPUR_05437. The atrochrysone carboxyl ACP thioesterase CPUR_05436 then breaks the thioester bond and releases the atrochrysone carboxylic acid from CPUR_05437. The atrochrysone carboxylic acid is then converted to atrochrysone which is further transformed into emodin anthrone. The next step is performed by the anthrone oxygenase CPUR_05434 that catalyzes the oxidation of emodinanthrone to emodin. Emodin is further modified to yield monodictyphenone via several steps involving CPUR_05427, CPUR_05428, CPUR_05429 and CPUR_05430. The short chain dehydrogenase/reductase CPUR_05418 then catalyzes the C-5 ketoreduction to give the xanthone skeleton of the monomeric units. Ergochromes formation requires further dimerization steps of different xanthone units, probably catalyzed by the cytochrome P450 monooxygenase CPUR_05419. CPUR_05425, CPUR_05426 and CPUR_05431 are unique to Claviceps, thus it is likely that they are involved in further modification of xanthone units or in their dimerization. The yellow ergochromes and the red anthraquinone pigments endocrocin and clavorubin are products from the same PKS derived precursors and the latter are likely shunt products in the pathway of xanthone biosynthesis. It is proposed that atrochrysone carboxylic acid released from the PKS CPUR_05437 can also be converted to endocrocin anthrone which is further oxidized into endocrocin by CPUR_05435. Endocrocin could be then modified to clavorubin, possibly by CPUR_05423 and CPUR_05431. Clavorubin is the principal anthraquinone metabolite produced by the cluster with a much higher yield compared to endocrocin. In Claviceps purpurea (strain 20.1) (Ergot fungus), this protein is Monooxygenase CPUR_05417.